The sequence spans 188 residues: Pyridoxal 5'-phosphate synthase subunit PdxT (188 aa).

46–48 (GES) is a binding site for L-glutamine. Cysteine 78 serves as the catalytic Nucleophile. L-glutamine contacts are provided by residues arginine 105 and 134-135 (IR). Catalysis depends on charge relay system residues histidine 170 and glutamate 172.

It belongs to the glutaminase PdxT/SNO family. In terms of assembly, in the presence of PdxS, forms a dodecamer of heterodimers. Only shows activity in the heterodimer.

It catalyses the reaction aldehydo-D-ribose 5-phosphate + D-glyceraldehyde 3-phosphate + L-glutamine = pyridoxal 5'-phosphate + L-glutamate + phosphate + 3 H2O + H(+). The enzyme catalyses L-glutamine + H2O = L-glutamate + NH4(+). The protein operates within cofactor biosynthesis; pyridoxal 5'-phosphate biosynthesis. In terms of biological role, catalyzes the hydrolysis of glutamine to glutamate and ammonia as part of the biosynthesis of pyridoxal 5'-phosphate. The resulting ammonia molecule is channeled to the active site of PdxS. This is Pyridoxal 5'-phosphate synthase subunit PdxT from Thermotoga sp. (strain RQ2).